A 368-amino-acid chain; its full sequence is tRNA-specific 2-thiouridylase MnmA (368 aa).

Residues 11 to 18 (GMSGGVDS) and methionine 37 contribute to the ATP site. The interval 97–99 (NPD) is interaction with target base in tRNA. The active-site Nucleophile is the cysteine 102. Cysteine 102 and cysteine 199 are joined by a disulfide. Glycine 127 serves as a coordination point for ATP. An interaction with tRNA region spans residues 149–151 (KDQ). Cysteine 199 functions as the Cysteine persulfide intermediate in the catalytic mechanism. The interaction with tRNA stretch occupies residues 311 to 312 (RY).

It belongs to the MnmA/TRMU family. Interacts with TusE.

The protein localises to the cytoplasm. The catalysed reaction is S-sulfanyl-L-cysteinyl-[protein] + uridine(34) in tRNA + AH2 + ATP = 2-thiouridine(34) in tRNA + L-cysteinyl-[protein] + A + AMP + diphosphate + H(+). Catalyzes the 2-thiolation of uridine at the wobble position (U34) of tRNA(Lys), tRNA(Glu) and tRNA(Gln), leading to the formation of s(2)U34, the first step of tRNA-mnm(5)s(2)U34 synthesis. Sulfur is provided by IscS, via a sulfur-relay system. Binds ATP and its substrate tRNAs. This Shigella dysenteriae serotype 1 (strain Sd197) protein is tRNA-specific 2-thiouridylase MnmA.